A 460-amino-acid polypeptide reads, in one-letter code: UDP-N-acetylmuramoylalanine--D-glutamate ligase (460 aa).

ATP is bound at residue 123-129 (GTNGKTT).

The protein belongs to the MurCDEF family.

It localises to the cytoplasm. The enzyme catalyses UDP-N-acetyl-alpha-D-muramoyl-L-alanine + D-glutamate + ATP = UDP-N-acetyl-alpha-D-muramoyl-L-alanyl-D-glutamate + ADP + phosphate + H(+). It participates in cell wall biogenesis; peptidoglycan biosynthesis. Its function is as follows. Cell wall formation. Catalyzes the addition of glutamate to the nucleotide precursor UDP-N-acetylmuramoyl-L-alanine (UMA). This chain is UDP-N-acetylmuramoylalanine--D-glutamate ligase (murD), found in Enterococcus hirae.